Here is a 282-residue protein sequence, read N- to C-terminus: Deoxyribonuclease-1 (282 aa).

A signal peptide spans 1 to 20 (MARLVLELLAAALLLRVAAT). A glycan (N-linked (GlcNAc...) asparagine) is linked at asparagine 38. Glutamate 98 is an active-site residue. Cysteine 121 and cysteine 124 are disulfide-bonded. Histidine 154 is an active-site residue. The cysteines at positions 193 and 229 are disulfide-linked.

Belongs to the DNase I family. It depends on Ca(2+) as a cofactor. Mg(2+) is required as a cofactor. Post-translationally, N-glycosylated.

The protein resides in the secreted. The protein localises to the zymogen granule. It is found in the nucleus envelope. It carries out the reaction Endonucleolytic cleavage to 5'-phosphodinucleotide and 5'-phosphooligonucleotide end-products.. Its function is as follows. Serum endocuclease secreted into body fluids by a wide variety of exocrine and endocrine organs. Expressed by non-hematopoietic tissues and preferentially cleaves protein-free DNA. Among other functions, seems to be involved in cell death by apoptosis. Binds specifically to G-actin and blocks actin polymerization. The polypeptide is Deoxyribonuclease-1 (DNASE1) (Gallus gallus (Chicken)).